A 64-amino-acid chain; its full sequence is Large ribosomal subunit protein uL29 (64 aa).

The protein belongs to the universal ribosomal protein uL29 family.

The polypeptide is Large ribosomal subunit protein uL29 (rpl29) (Methanothermobacter thermautotrophicus (strain ATCC 29096 / DSM 1053 / JCM 10044 / NBRC 100330 / Delta H) (Methanobacterium thermoautotrophicum)).